A 608-amino-acid chain; its full sequence is Cytoplasmic dynein 1 intermediate chain 1 (608 aa).

Composition is skewed to basic and acidic residues over residues 1-13 and 20-60; these read MSDK…ELER and QIRE…RETE. Positions 1–106 are disordered; sequence MSDKSDLKAE…SGDLGPLTRR (106 aa). Ser-2 is modified (N-acetylserine). Ser-50 bears the Phosphoserine mark. Residues 70–79 are compositionally biased toward pro residues; sequence PEPPLVPTPM. Residues 80 to 90 are compositionally biased toward low complexity; it reads SPSSKSVSTPS. A Phosphoserine modification is found at Ser-83. At Thr-88 the chain carries Phosphothreonine. Ser-90, Ser-94, and Ser-97 each carry phosphoserine. The interaction with DYNLT1 stretch occupies residues 110 to 126; sequence KLGVSKITQVDFLPREV. The interval 132 to 184 is disordered; sequence ETQTPLATHQSEEDEDDEEMVEPKGDQDSEQENEDKKQEVKEAPPRELTEEEK. A Phosphothreonine modification is found at Thr-139. Phosphoserine is present on residues Ser-142 and Ser-160. Over residues 165–184 the composition is skewed to basic and acidic residues; sequence EDKKQEVKEAPPRELTEEEK. WD repeat units lie at residues 248-297, 301-341, 350-391, 400-440, 445-490, 493-533, and 539-578; these read SKHR…TTPE, HCQS…RTPV, AHTH…TPQE, SKPV…AGIG, GHQG…PLYS, DNAD…EVPT, and EGAS…VPHN. Position 598 is a phosphoserine (Ser-598).

The protein belongs to the dynein intermediate chain family. Homodimer. The cytoplasmic dynein 1 complex consists of two catalytic heavy chains (HCs) and a number of non-catalytic subunits presented by intermediate chains (ICs), light intermediate chains (LICs) and light chains (LCs); the composition seems to vary in respect to the IC, LIC and LC composition. The heavy chain homodimer serves as a scaffold for the probable homodimeric assembly of the respective non-catalytic subunits. The ICs and LICs bind directly to the HC dimer and the LCs assemble on the IC dimer. Interacts with DYNC1H1. Interacts with DYNLT1 and DYNLT3. Interacts with DCTN1. Interacts with MCRS1; the interaction is required for the proper distribution of centriolar satellites.

The protein localises to the cytoplasm. The protein resides in the chromosome. Its subcellular location is the centromere. It localises to the kinetochore. It is found in the cytoskeleton. The protein localises to the spindle pole. Its function is as follows. Acts as one of several non-catalytic accessory components of the cytoplasmic dynein 1 complex that are thought to be involved in linking dynein to cargos and to adapter proteins that regulate dynein function. Cytoplasmic dynein 1 acts as a motor for the intracellular retrograde motility of vesicles and organelles along microtubules. The intermediate chains mediate the binding of dynein to dynactin via its 150 kDa component (p150-glued) DCTN1. May play a role in mediating the interaction of cytoplasmic dynein with membranous organelles and kinetochores. The polypeptide is Cytoplasmic dynein 1 intermediate chain 1 (DYNC1I1) (Bos taurus (Bovine)).